The primary structure comprises 163 residues: Nuclear cap-binding protein subunit 2 (163 aa).

MRNA-binding positions include Tyr18, Tyr41, 110 to 114 (RVDWD), 121 to 125 (RQYGR), and 131 to 132 (QV). The region spanning 38–116 (STLYVGNLSF…RIVRVDWDAG (79 aa)) is the RRM domain.

The protein belongs to the RRM NCBP2 family. Component of the nuclear cap-binding complex (CBC), a heterodimer composed of Cbp80 and Cbp20 that interacts with m7GpppG-capped RNA.

It is found in the nucleus. Its function is as follows. Component of the cap-binding complex (CBC), which binds co-transcriptionally to the 5' cap of pre-mRNAs and is involved in various processes such as pre-mRNA splicing and RNA-mediated gene silencing (RNAi). The CBC complex is involved in miRNA-mediated RNA interference and is required for primary microRNAs (miRNAs) processing. Also involved in innate immunity via the short interfering RNAs (siRNAs) processing machinery by restricting the viral RNA production. In the CBC complex, Cbp20 recognizes and binds capped RNAs (m7GpppG-capped RNA) but requires Cbp80 to stabilize the movement of its N-terminal loop and lock the CBC into a high affinity cap-binding state with the cap structure. The polypeptide is Nuclear cap-binding protein subunit 2 (Cbp20) (Anopheles gambiae (African malaria mosquito)).